Here is a 196-residue protein sequence, read N- to C-terminus: Phosphoheptose isomerase (196 aa).

The SIS domain maps to 31 to 196 (VARQFKAGNK…KAGLEAQIAV (166 aa)). Residue 46–48 (NGG) coordinates substrate. Residues His55 and Glu59 each contribute to the Zn(2+) site. Residues Glu59, 88 to 89 (ND), 114 to 116 (STS), Ser119, and Gln166 each bind substrate. 2 residues coordinate Zn(2+): Gln166 and His174.

It belongs to the SIS family. GmhA subfamily. It depends on Zn(2+) as a cofactor.

It is found in the cytoplasm. It carries out the reaction 2 D-sedoheptulose 7-phosphate = D-glycero-alpha-D-manno-heptose 7-phosphate + D-glycero-beta-D-manno-heptose 7-phosphate. Its pathway is carbohydrate biosynthesis; D-glycero-D-manno-heptose 7-phosphate biosynthesis; D-glycero-alpha-D-manno-heptose 7-phosphate and D-glycero-beta-D-manno-heptose 7-phosphate from sedoheptulose 7-phosphate: step 1/1. In terms of biological role, catalyzes the isomerization of sedoheptulose 7-phosphate in D-glycero-D-manno-heptose 7-phosphate. This is Phosphoheptose isomerase from Crocosphaera subtropica (strain ATCC 51142 / BH68) (Cyanothece sp. (strain ATCC 51142)).